The chain runs to 437 residues: Serine carboxypeptidase-like 7 (437 aa).

The signal sequence occupies residues 1–25 (MANDYVSTVLLLLSLLIFLSQRTDS). Cystine bridges form between Cys84–Cys327, Cys248–Cys262, and Cys286–Cys293. Asn105 carries an N-linked (GlcNAc...) asparagine glycan. Residue Ser180 is part of the active site. The N-linked (GlcNAc...) asparagine glycan is linked to Asn346. Residue Asp362 is part of the active site. Asn378 is a glycosylation site (N-linked (GlcNAc...) asparagine). His415 is an active-site residue.

This sequence belongs to the peptidase S10 family. In terms of tissue distribution, ubiquitous.

It localises to the secreted. Functionally, probable carboxypeptidase. The sequence is that of Serine carboxypeptidase-like 7 (SCPL7) from Arabidopsis thaliana (Mouse-ear cress).